A 415-amino-acid polypeptide reads, in one-letter code: Tyrosine--tRNA ligase (415 aa).

Y34 provides a ligand contact to L-tyrosine. The short motif at P39 to H48 is the 'HIGH' region element. L-tyrosine is bound by residues Y164 and Q168. The 'KMSKS' region motif lies at K226 to S230. K229 provides a ligand contact to ATP. One can recognise an S4 RNA-binding domain in the interval K348–K415.

It belongs to the class-I aminoacyl-tRNA synthetase family. TyrS type 1 subfamily. Homodimer.

It is found in the cytoplasm. The enzyme catalyses tRNA(Tyr) + L-tyrosine + ATP = L-tyrosyl-tRNA(Tyr) + AMP + diphosphate + H(+). Functionally, catalyzes the attachment of tyrosine to tRNA(Tyr) in a two-step reaction: tyrosine is first activated by ATP to form Tyr-AMP and then transferred to the acceptor end of tRNA(Tyr). This is Tyrosine--tRNA ligase from Leuconostoc citreum (strain KM20).